Reading from the N-terminus, the 452-residue chain is Elongation factor Tu, mitochondrial (452 aa).

A mitochondrion-targeting transit peptide spans 1–43; that stretch reads MAAATLLRATPRFSGLCASPTPFLQGRLRPLKAPASPFLCRGL. The tr-type G domain occupies 55 to 251; sequence KPHVNVGTIG…AVDTYIPVPT (197 aa). The tract at residues 64–71 is G1; the sequence is GHVDHGKT. The GTP site is built by D67, G69, K70, T71, and T72. T71 is a binding site for Mg(2+). K79 is subject to N6-acetyllysine. Residue K88 is modified to N6-acetyllysine; alternate. N6-succinyllysine; alternate is present on K88. The interval 105-109 is G2; that stretch reads GITIN. Positions 126–129 are G3; it reads DCPG. N181, D184, S219, A220, and L221 together coordinate GTP. The G4 stretch occupies residues 181-184; the sequence is NKAD. Positions 219–221 are G5; that stretch reads SAL. K234 bears the N6-succinyllysine mark. Position 256 is an N6-acetyllysine (K256). T278 is subject to Phosphothreonine. K286 bears the N6-succinyllysine mark. S312 bears the Phosphoserine mark. An N6-acetyllysine mark is found at K361 and K418.

Belongs to the TRAFAC class translation factor GTPase superfamily. Classic translation factor GTPase family. EF-Tu/EF-1A subfamily. As to quaternary structure, interacts with NLRX1. Interacts with ATG16L1.

It localises to the mitochondrion. The enzyme catalyses GTP + H2O = GDP + phosphate + H(+). Functionally, GTP hydrolase that promotes the GTP-dependent binding of aminoacyl-tRNA to the A-site of ribosomes during protein biosynthesis. Also plays a role in the regulation of autophagy and innate immunity. Recruits ATG5-ATG12 and NLRX1 at mitochondria and serves as a checkpoint of the RIGI-MAVS pathway. In turn, inhibits RLR-mediated type I interferon while promoting autophagy. This is Elongation factor Tu, mitochondrial (Tufm) from Mus musculus (Mouse).